Here is a 142-residue protein sequence, read N- to C-terminus: Large ribosomal subunit protein uL13 (142 aa).

This sequence belongs to the universal ribosomal protein uL13 family. As to quaternary structure, part of the 50S ribosomal subunit.

Its function is as follows. This protein is one of the early assembly proteins of the 50S ribosomal subunit, although it is not seen to bind rRNA by itself. It is important during the early stages of 50S assembly. This Teredinibacter turnerae (strain ATCC 39867 / T7901) protein is Large ribosomal subunit protein uL13.